The sequence spans 244 residues: Nonsense-mediated decay protein 4 (244 aa).

It localises to the cytoplasm. Involved in nonsense-mediated decay of mRNAs containing premature stop codons. The sequence is that of Nonsense-mediated decay protein 4 (NMD4) from Kluyveromyces lactis (strain ATCC 8585 / CBS 2359 / DSM 70799 / NBRC 1267 / NRRL Y-1140 / WM37) (Yeast).